The following is a 276-amino-acid chain: A-factor receptor protein (276 aa).

The HTH tetR-type domain occupies Val8–Val68. Residues Ala31–Phe50 constitute a DNA-binding region (H-T-H motif). Basic and acidic residues predominate over residues Glu207 to Ala220. The interval Glu207–Ala276 is disordered. A compositionally biased stretch (low complexity) spans Glu221–Ser235. Positions Arg236–Gly257 are enriched in gly residues.

Homodimer or multimer. Binds to both DNA and A-factor as a homodimer.

It localises to the cytoplasm. Its function is as follows. Represses adpA expression by binding to the promoter region in the absence of A-factor, causing repression of streptomycin production and of sporulation. This is A-factor receptor protein (arpA) from Streptomyces griseus.